The following is a 325-amino-acid chain: Aldo-keto reductase family 1 member A1 (325 aa).

At alanine 2 the chain carries N-acetylalanine. Serine 4 carries the post-translational modification Phosphoserine. NADP(+)-binding positions include 11–20, threonine 21, and tryptophan 22; that span reads GQKMPLIGLG. Residue serine 38 is modified to Phosphoserine. Aspartate 45 contacts NADP(+). Tyrosine 50 serves as the catalytic Proton donor. Lysine 127 carries the post-translational modification N6-acetyllysine; alternate. An N6-succinyllysine; alternate modification is found at lysine 127. Lysine 145 bears the N6-succinyllysine mark. NADP(+)-binding residues include serine 162, asparagine 163, serine 211, leucine 213, serine 215, serine 216, lysine 263, serine 264, isoleucine 265, threonine 266, arginine 269, glutamine 272, and asparagine 273. Position 211 is a phosphoserine (serine 211).

The protein belongs to the aldo/keto reductase family.

The protein localises to the cytoplasm. The protein resides in the cytosol. It is found in the apical cell membrane. It carries out the reaction a primary alcohol + NADP(+) = an aldehyde + NADPH + H(+). The catalysed reaction is L-gulonate + NADP(+) = aldehydo-D-glucuronate + NADPH + H(+). It catalyses the reaction L-gulono-1,4-lactone + NADP(+) = D-glucurono-3,6-lactone + NADPH + H(+). The enzyme catalyses allyl alcohol + NADP(+) = acrolein + NADPH + H(+). It carries out the reaction glycerol + NADP(+) = D-glyceraldehyde + NADPH + H(+). The catalysed reaction is glycerol + NADP(+) = L-glyceraldehyde + NADPH + H(+). It catalyses the reaction hydroxyacetone + NADP(+) = methylglyoxal + NADPH + H(+). The enzyme catalyses 3-deoxyfructose + NADP(+) = 3-deoxyglucosone + NADPH + H(+). It carries out the reaction (R)-mevalonate + NADP(+) = (R)-mevaldate + NADPH + H(+). The catalysed reaction is pyridine 3-methanol + NADP(+) = pyridine-3-carbaldehyde + NADPH + H(+). It catalyses the reaction S-nitroso-CoA + NADPH + H(+) = sulfinamide-CoA + NADP(+). The enzyme catalyses S-nitrosoglutathione + NADPH + H(+) = S-(hydroxysulfenamide)glutathione + NADP(+). Functionally, catalyzes the NADPH-dependent reduction of a wide variety of carbonyl-containing compounds to their corresponding alcohols. Displays enzymatic activity towards endogenous metabolites such as aromatic and aliphatic aldehydes, ketones, monosaccharides and bile acids, with a preference for negatively charged substrates, such as glucuronate and succinic semialdehyde. Functions as a detoxifiying enzyme by reducing a range of toxic aldehydes. Reduces methylglyoxal and 3-deoxyglucosone, which are present at elevated levels under hyperglycemic conditions and are cytotoxic. Involved also in the detoxification of lipid-derived aldehydes like acrolein. Plays a role in the activation of procarcinogens, such as polycyclic aromatic hydrocarbon trans-dihydrodiols, and in the metabolism of various xenobiotics and drugs. Also acts as an inhibitor of protein S-nitrosylation by mediating degradation of S-nitroso-coenzyme A (S-nitroso-CoA), a cofactor required to S-nitrosylate proteins. S-nitroso-CoA reductase activity is involved in reprogramming intermediary metabolism in renal proximal tubules, notably by inhibiting protein S-nitrosylation of isoform 2 of PKM (PKM2). Also acts as a S-nitroso-glutathione reductase by catalyzing the NADPH-dependent reduction of S-nitrosoglutathione. Displays no reductase activity towards retinoids. The protein is Aldo-keto reductase family 1 member A1 (AKR1A1) of Pongo abelii (Sumatran orangutan).